Consider the following 475-residue polypeptide: Ribulose bisphosphate carboxylase large chain (475 aa).

Positions 1–2 are excised as a propeptide; sequence MS. Position 3 is an N-acetylproline (proline 3). Lysine 14 is modified (N6,N6,N6-trimethyllysine). Residues asparagine 123 and threonine 173 each contribute to the substrate site. Lysine 175 acts as the Proton acceptor in catalysis. Lysine 177 serves as a coordination point for substrate. Mg(2+) is bound by residues lysine 201, aspartate 203, and glutamate 204. Lysine 201 is modified (N6-carboxylysine). The active-site Proton acceptor is histidine 294. Residues arginine 295, histidine 327, and serine 379 each contribute to the substrate site.

The protein belongs to the RuBisCO large chain family. Type I subfamily. Heterohexadecamer of 8 large chains and 8 small chains. Mg(2+) is required as a cofactor.

It is found in the plastid. It localises to the chloroplast. The catalysed reaction is 2 (2R)-3-phosphoglycerate + 2 H(+) = D-ribulose 1,5-bisphosphate + CO2 + H2O. It carries out the reaction D-ribulose 1,5-bisphosphate + O2 = 2-phosphoglycolate + (2R)-3-phosphoglycerate + 2 H(+). Functionally, ruBisCO catalyzes two reactions: the carboxylation of D-ribulose 1,5-bisphosphate, the primary event in carbon dioxide fixation, as well as the oxidative fragmentation of the pentose substrate in the photorespiration process. Both reactions occur simultaneously and in competition at the same active site. The chain is Ribulose bisphosphate carboxylase large chain from Huperzia lucidula (Shining clubmoss).